A 1344-amino-acid polypeptide reads, in one-letter code: Period circadian protein homolog 2 (1344 aa).

2 disordered regions span residues methionine 1–glutamine 21 and glutamate 42–aspartate 112. The span at tyrosine 10 to glutamine 21 shows a compositional bias: polar residues. The span at serine 78–asparagine 89 shows a compositional bias: low complexity. Residues histidine 99–lysine 111 show a composition bias toward basic and acidic residues. The Nuclear export signal 1 signature appears at leucine 161–alanine 170. Residues isoleucine 231 to leucine 298 enclose the PAS 1 domain. Residues leucine 358 to leucine 362 carry the LXXLL motif. Residues tyrosine 371–glutamine 437 form the PAS 2 domain. The 44-residue stretch at tyrosine 445 to proline 488 folds into the PAC domain. The Nuclear export signal 2 signature appears at isoleucine 512 to leucine 521. Disordered regions lie at residues glycine 531 to aspartate 609, alanine 661 to glutamine 686, leucine 823 to serine 894, threonine 1038 to glutamine 1065, and threonine 1107 to glutamine 1126. Over residues serine 549–aspartate 559 the composition is skewed to low complexity. Basic and acidic residues-rich tracts occupy residues aspartate 560–lysine 573 and threonine 583–alanine 597. Over residues proline 667 to alanine 684 the composition is skewed to polar residues. The span at aspartate 825 to glycine 836 shows a compositional bias: basic and acidic residues. The Nuclear localization signal motif lies at lysine 851–glutamine 865. The segment covering lysine 852–isoleucine 862 has biased composition (basic residues). 3 stretches are compositionally biased toward polar residues: residues glutamine 865–threonine 875, glycine 885–serine 894, and serine 1045–alanine 1059. The LXXLL motif lies at leucine 1138–leucine 1142. Positions glycine 1149–glycine 1172 are enriched in low complexity. Positions glycine 1149 to serine 1197 are disordered. A compositionally biased stretch (polar residues) spans glycine 1177–serine 1197. The tract at residues serine 1244 to threonine 1344 is CRY binding domain.

Component of the circadian clock oscillator which includes the CRY proteins, CLOCK or NPAS2, BMAL1 or BMAL2, CSNK1E, and the PER proteins. Interacts directly with PER3, and through a C-terminal domain, with CRY1 and CRY2.

It localises to the nucleus. The protein resides in the cytoplasm. Transcriptional repressor which forms a core component of the circadian clock. The circadian clock, an internal time-keeping system, regulates various physiological processes through the generation of approximately 24 hour circadian rhythms in gene expression, which are translated into rhythms in metabolism and behavior. It is derived from the Latin roots 'circa' (about) and 'diem' (day) and acts as an important regulator of a wide array of physiological functions including metabolism, sleep, body temperature, blood pressure, endocrine, immune, cardiovascular, and renal function. Consists of two major components: the central clock, residing in the suprachiasmatic nucleus (SCN) of the brain, and the peripheral clocks that are present in nearly every tissue and organ system. Both the central and peripheral clocks can be reset by environmental cues, also known as Zeitgebers (German for 'timegivers'). The predominant Zeitgeber for the central clock is light, which is sensed by retina and signals directly to the SCN. The central clock entrains the peripheral clocks through neuronal and hormonal signals, body temperature and feeding-related cues, aligning all clocks with the external light/dark cycle. Circadian rhythms allow an organism to achieve temporal homeostasis with its environment at the molecular level by regulating gene expression to create a peak of protein expression once every 24 hours to control when a particular physiological process is most active with respect to the solar day. Transcription and translation of core clock components (CLOCK, NPAS2, BMAL1, BMAL2, PER1, PER2, PER3, CRY1 and CRY2) plays a critical role in rhythm generation, whereas delays imposed by post-translational modifications (PTMs) are important for determining the period (tau) of the rhythms (tau refers to the period of a rhythm and is the length, in time, of one complete cycle). A diurnal rhythm is synchronized with the day/night cycle, while the ultradian and infradian rhythms have a period shorter and longer than 24 hours, respectively. Disruptions in the circadian rhythms contribute to the pathology of cardiovascular diseases, cancer, metabolic syndrome and aging. A transcription/translation feedback loop (TTFL) forms the core of the molecular circadian clock mechanism. Transcription factors, CLOCK or NPAS2 and BMAL1 or BMAL2, form the positive limb of the feedback loop, act in the form of a heterodimer and activate the transcription of core clock genes and clock-controlled genes (involved in key metabolic processes), harboring E-box elements (5'-CACGTG-3') within their promoters. The core clock genes: PER1/2/3 and CRY1/2 which are transcriptional repressors form the negative limb of the feedback loop and interact with the CLOCK|NPAS2-BMAL1|BMAL2 heterodimer inhibiting its activity and thereby negatively regulating their own expression. This heterodimer also activates nuclear receptors NR1D1/2 and RORA/B/G, which form a second feedback loop and which activate and repress BMAL1 transcription, respectively. PER1 and PER2 proteins transport CRY1 and CRY2 into the nucleus with appropriate circadian timing, but also contribute directly to repression of clock-controlled target genes through interaction with several classes of RNA-binding proteins, helicases and others transcriptional repressors. PER appears to regulate circadian control of transcription by at least three different modes. First, interacts directly with the CLOCK-BMAL1 at the tail end of the nascent transcript peak to recruit complexes containing the SIN3-HDAC that remodel chromatin to repress transcription. Second, brings H3K9 methyltransferases such as SUV39H1 and SUV39H2 to the E-box elements of the circadian target genes, like PER2 itself or PER1. The recruitment of each repressive modifier to the DNA seems to be very precisely temporally orchestrated by the large PER complex, the deacetylases acting before than the methyltransferases. Additionally, large PER complexes are also recruited to the target genes 3' termination site through interactions with RNA-binding proteins and helicases that may play a role in transcription termination to regulate transcription independently of CLOCK-BMAL1 interactions. This Gallus gallus (Chicken) protein is Period circadian protein homolog 2 (PER2).